The following is a 648-amino-acid chain: MAQISLTFPDGNARSYDAGITPAEVAADISTSLAKKAISATVDGQHWDLQWPVTQDAAIAIHTMKDEAQANELIRHDLAHIMARAVQEIWPDTKVTIGPVIENGWYYDFDRAEPFTPEDLGTIEKKMKEIINKREPVTTEVWEREKAIQYYTDNNEPYKVELIDSIPGDEPLRMYWHGDWQDLCRGPHLQHTGQVPGDAFKLMSIAGAYWRGDSDRQMLQRIYGVAFTGKEKLKAHLTMLEEAAKRDHRKLGREMNLFHMQEEAPGQVFWHPNGWRIYTTLQDYMRRMQDRDGYVEVNTPQVVDRKLWEKSGHWDKYQENMFIVEVDEDHAREKAVNALKPMNCPCHVQVFNQGLKSYRDLPLRMAEFGSCARYEPSGALHGIMRVRGFTQDDGHIFCTEDQITSETAKFIAFLSKVYADLGFDNWTIKLSTRPEQRIGSDETWDNMEQALGDACKAAGYDYEILEGEGAFYGPKLEFTLTDAIGRNWQCGTLQVDANLPERLEASFIGQDGSKHRPVMLHRATLGSFERFIGILIEEHAGKLPFWLAPRQVVVASITSEADDYVNEVVETLRAAGVRAEADTRNEKINYKVREHSVGKVPVILAVGHREVEERTVSVRRLGEKQTKVESLTNVTEELAKAATPPDLL.

The region spanning 1–63 (MAQISLTFPD…TQDAAIAIHT (63 aa)) is the TGS domain. A catalytic region spans residues 247–544 (DHRKLGREMN…LIEEHAGKLP (298 aa)). The Zn(2+) site is built by C344, H395, and H521.

The protein belongs to the class-II aminoacyl-tRNA synthetase family. As to quaternary structure, homodimer. Requires Zn(2+) as cofactor.

The protein localises to the cytoplasm. The enzyme catalyses tRNA(Thr) + L-threonine + ATP = L-threonyl-tRNA(Thr) + AMP + diphosphate + H(+). Catalyzes the attachment of threonine to tRNA(Thr) in a two-step reaction: L-threonine is first activated by ATP to form Thr-AMP and then transferred to the acceptor end of tRNA(Thr). Also edits incorrectly charged L-seryl-tRNA(Thr). This chain is Threonine--tRNA ligase, found in Ruegeria sp. (strain TM1040) (Silicibacter sp.).